A 444-amino-acid polypeptide reads, in one-letter code: 23S rRNA (uracil(1939)-C(5))-methyltransferase RlmD (444 aa).

Positions 5–67 constitute a TRAM domain; sequence RNRFDRTPFQ…RHFDEAKTVE (63 aa). Cysteine 80, cysteine 86, cysteine 89, and cysteine 168 together coordinate [4Fe-4S] cluster. The S-adenosyl-L-methionine site is built by glutamine 276, phenylalanine 305, asparagine 310, glutamate 326, aspartate 353, and aspartate 374. Cysteine 400 functions as the Nucleophile in the catalytic mechanism.

The protein belongs to the class I-like SAM-binding methyltransferase superfamily. RNA M5U methyltransferase family. RlmD subfamily.

It carries out the reaction uridine(1939) in 23S rRNA + S-adenosyl-L-methionine = 5-methyluridine(1939) in 23S rRNA + S-adenosyl-L-homocysteine + H(+). Its function is as follows. Catalyzes the formation of 5-methyl-uridine at position 1939 (m5U1939) in 23S rRNA. The chain is 23S rRNA (uracil(1939)-C(5))-methyltransferase RlmD from Xanthomonas oryzae pv. oryzae (strain MAFF 311018).